Reading from the N-terminus, the 319-residue chain is ATP-dependent 6-phosphofructokinase (319 aa).

Position 11 (glycine 11) interacts with ATP. 21 to 25 (RAVVR) lines the ADP pocket. Residues 72–73 (RS) and 102–105 (GDGS) contribute to the ATP site. Residue aspartate 103 coordinates Mg(2+). Substrate is bound at residue 125 to 127 (TID). Aspartate 127 functions as the Proton acceptor in the catalytic mechanism. Arginine 154 is an ADP binding site. Substrate-binding positions include arginine 162 and 169–171 (MGR). ADP-binding positions include 185–187 (GAE), arginine 211, and 213–215 (KKH). Substrate contacts are provided by residues glutamate 222, arginine 243, and 249 to 252 (HIQR).

The protein belongs to the phosphofructokinase type A (PFKA) family. ATP-dependent PFK group I subfamily. Prokaryotic clade 'B1' sub-subfamily. Homotetramer. Mg(2+) is required as a cofactor.

The protein localises to the cytoplasm. The enzyme catalyses beta-D-fructose 6-phosphate + ATP = beta-D-fructose 1,6-bisphosphate + ADP + H(+). It functions in the pathway carbohydrate degradation; glycolysis; D-glyceraldehyde 3-phosphate and glycerone phosphate from D-glucose: step 3/4. With respect to regulation, allosterically activated by ADP and other diphosphonucleosides, and allosterically inhibited by phosphoenolpyruvate. In terms of biological role, catalyzes the phosphorylation of D-fructose 6-phosphate to fructose 1,6-bisphosphate by ATP, the first committing step of glycolysis. This chain is ATP-dependent 6-phosphofructokinase, found in Oceanobacillus iheyensis (strain DSM 14371 / CIP 107618 / JCM 11309 / KCTC 3954 / HTE831).